A 281-amino-acid polypeptide reads, in one-letter code: Ribosomal RNA small subunit methyltransferase A (281 aa).

H25, L27, G52, E74, D100, and N119 together coordinate S-adenosyl-L-methionine.

This sequence belongs to the class I-like SAM-binding methyltransferase superfamily. rRNA adenine N(6)-methyltransferase family. RsmA subfamily.

It localises to the cytoplasm. It carries out the reaction adenosine(1518)/adenosine(1519) in 16S rRNA + 4 S-adenosyl-L-methionine = N(6)-dimethyladenosine(1518)/N(6)-dimethyladenosine(1519) in 16S rRNA + 4 S-adenosyl-L-homocysteine + 4 H(+). Its function is as follows. Specifically dimethylates two adjacent adenosines (A1518 and A1519) in the loop of a conserved hairpin near the 3'-end of 16S rRNA in the 30S particle. May play a critical role in biogenesis of 30S subunits. The sequence is that of Ribosomal RNA small subunit methyltransferase A from Paramagnetospirillum magneticum (strain ATCC 700264 / AMB-1) (Magnetospirillum magneticum).